Consider the following 178-residue polypeptide: Protein GrpE (178 aa).

This sequence belongs to the GrpE family. Homodimer.

It localises to the cytoplasm. Participates actively in the response to hyperosmotic and heat shock by preventing the aggregation of stress-denatured proteins, in association with DnaK and GrpE. It is the nucleotide exchange factor for DnaK and may function as a thermosensor. Unfolded proteins bind initially to DnaJ; upon interaction with the DnaJ-bound protein, DnaK hydrolyzes its bound ATP, resulting in the formation of a stable complex. GrpE releases ADP from DnaK; ATP binding to DnaK triggers the release of the substrate protein, thus completing the reaction cycle. Several rounds of ATP-dependent interactions between DnaJ, DnaK and GrpE are required for fully efficient folding. This chain is Protein GrpE, found in Rickettsia prowazekii (strain Madrid E).